A 301-amino-acid polypeptide reads, in one-letter code: Cytosolic sulfotransferase 3 (301 aa).

Residue 53 to 58 (KAGTTW) coordinates 3'-phosphoadenylyl sulfate. Histidine 115 (proton acceptor) is an active-site residue. Residues arginine 137, serine 145, tyrosine 201, 235–240 (VQFDAM), and 263–265 (RKG) each bind 3'-phosphoadenylyl sulfate.

This sequence belongs to the sulfotransferase 1 family.

The protein localises to the cytoplasm. Its activity is regulated as follows. Inhibited by Hg(2+), Co(2+), Zn(2+), Cd(2+), Cu(2+) and Pb(2+) ions. Activated slightly by Mn(2+), Ca(2+) and Mg(2+) ions. Functionally, sulfotransferase that utilizes 3'-phospho-5'-adenylyl sulfate (PAPS) as sulfonate donor to catalyze the sulfate conjugation of a variety of xenobiotic and endogenous compounds, including dopamine, T3 (triiodo-L-thyronine), T4 (thyroxine), estrone, DHEA (dehydroepiandrosterone), flavonoids, isoflavonoids and other phenolic compounds. In Danio rerio (Zebrafish), this protein is Cytosolic sulfotransferase 3.